A 116-amino-acid chain; its full sequence is Ribonuclease P protein component (116 aa).

The protein belongs to the RnpA family. In terms of assembly, consists of a catalytic RNA component (M1 or rnpB) and a protein subunit.

It carries out the reaction Endonucleolytic cleavage of RNA, removing 5'-extranucleotides from tRNA precursor.. In terms of biological role, RNaseP catalyzes the removal of the 5'-leader sequence from pre-tRNA to produce the mature 5'-terminus. It can also cleave other RNA substrates such as 4.5S RNA. The protein component plays an auxiliary but essential role in vivo by binding to the 5'-leader sequence and broadening the substrate specificity of the ribozyme. The polypeptide is Ribonuclease P protein component (Geobacter sp. (strain M21)).